We begin with the raw amino-acid sequence, 388 residues long: Chorismate synthase (388 aa).

Residues arginine 39 and arginine 45 each contribute to the NADP(+) site. FMN-binding positions include 130–132 (RSS), 251–252 (NA), glycine 296, 311–315 (KPIPT), and arginine 337.

The protein belongs to the chorismate synthase family. In terms of assembly, homotetramer. FMNH2 serves as cofactor.

The enzyme catalyses 5-O-(1-carboxyvinyl)-3-phosphoshikimate = chorismate + phosphate. Its pathway is metabolic intermediate biosynthesis; chorismate biosynthesis; chorismate from D-erythrose 4-phosphate and phosphoenolpyruvate: step 7/7. Its function is as follows. Catalyzes the anti-1,4-elimination of the C-3 phosphate and the C-6 proR hydrogen from 5-enolpyruvylshikimate-3-phosphate (EPSP) to yield chorismate, which is the branch point compound that serves as the starting substrate for the three terminal pathways of aromatic amino acid biosynthesis. This reaction introduces a second double bond into the aromatic ring system. In Streptococcus uberis (strain ATCC BAA-854 / 0140J), this protein is Chorismate synthase.